The chain runs to 167 residues: N-alpha-acetyltransferase (167 aa).

The 156-residue stretch at 12 to 167 (FTLRNARMDD…EDAYLMARPL (156 aa)) folds into the N-acetyltransferase domain. Tyr37 is a substrate binding site. Residue His88 participates in Zn(2+) binding. Residues 92–94 (IAV) and 100–105 (RKGIAT) contribute to the acetyl-CoA site. Glu127 contacts Zn(2+). Acetyl-CoA is bound by residues Asn132 and 139–141 (YEK). Position 154 (Tyr154) interacts with substrate.

Belongs to the acetyltransferase family. ARD1 subfamily. As to quaternary structure, homodimer.

The protein resides in the cytoplasm. The catalysed reaction is N-terminal L-alanyl-[protein] + acetyl-CoA = N-terminal N(alpha)-acetyl-L-alanyl-[protein] + CoA + H(+). The enzyme catalyses N-terminal L-seryl-[protein] + acetyl-CoA = N-terminal N(alpha)-acetyl-L-seryl-[protein] + CoA + H(+). It carries out the reaction N-terminal L-methionyl-L-leucyl-[protein] + acetyl-CoA = N-terminal N(alpha)-acetyl-L-methionyl-L-leucyl-[protein] + CoA + H(+). It catalyses the reaction N-terminal L-methionyl-L-glutamyl-[protein] + acetyl-CoA = N-terminal N(alpha)-acetyl-L-methionyl-L-glutamyl-[protein] + CoA + H(+). Its function is as follows. Displays alpha (N-terminal) acetyltransferase activity. Catalyzes the covalent attachment of an acetyl moiety from acetyl-CoA to the free alpha-amino group at the N-terminus of a protein. NAT is able to acetylate the alpha-amino group of methionine, alanine and serine N-terminal residue substrates, however it has a preference for Ser-N-terminal substrates. The polypeptide is N-alpha-acetyltransferase (Saccharolobus solfataricus (strain ATCC 35092 / DSM 1617 / JCM 11322 / P2) (Sulfolobus solfataricus)).